Reading from the N-terminus, the 807-residue chain is Microbial collagenase (807 aa).

A signal peptide spans 1–27 (MSHLLPFPRRRLALACLLASISGASFG). Histidine 434 contacts Zn(2+). Glutamate 435 is a catalytic residue. Histidine 438 contributes to the Zn(2+) binding site. Residues 562-585 (EVTPENPDTDPDTPTEPSDGVTQL) are disordered.

Belongs to the peptidase M9A family. Requires Zn(2+) as cofactor.

The protein localises to the secreted. It carries out the reaction Digestion of native collagen in the triple helical region at Xaa-|-Gly bonds. With synthetic peptides, a preference is shown for Gly at P3 and P1', Pro and Ala at P2 and P2', and hydroxyproline, Ala or Arg at P3'.. In terms of biological role, possesses gelatinolytic activity. In Vibrio vulnificus (strain CMCP6), this protein is Microbial collagenase.